Consider the following 130-residue polypeptide: uncharacterized protein (130 aa).

This is an uncharacterized protein from Treponema pallidum (strain Nichols).